A 298-amino-acid polypeptide reads, in one-letter code: UDP-N-acetylenolpyruvoylglucosamine reductase (298 aa).

The FAD-binding PCMH-type domain occupies 27 to 206 (VGGPAQRLYR…QQQIRRLLRQ (180 aa)). The active site involves Arg171. Ser220 serves as the catalytic Proton donor. Glu290 is an active-site residue.

It belongs to the MurB family. FAD serves as cofactor.

Its subcellular location is the cytoplasm. It catalyses the reaction UDP-N-acetyl-alpha-D-muramate + NADP(+) = UDP-N-acetyl-3-O-(1-carboxyvinyl)-alpha-D-glucosamine + NADPH + H(+). The protein operates within cell wall biogenesis; peptidoglycan biosynthesis. In terms of biological role, cell wall formation. The polypeptide is UDP-N-acetylenolpyruvoylglucosamine reductase (Nitrosococcus oceani (strain ATCC 19707 / BCRC 17464 / JCM 30415 / NCIMB 11848 / C-107)).